The sequence spans 155 residues: Protein-export protein SecB (155 aa).

Belongs to the SecB family. Homotetramer, a dimer of dimers. One homotetramer interacts with 1 SecA dimer.

The protein localises to the cytoplasm. Its function is as follows. One of the proteins required for the normal export of preproteins out of the cell cytoplasm. It is a molecular chaperone that binds to a subset of precursor proteins, maintaining them in a translocation-competent state. It also specifically binds to its receptor SecA. This chain is Protein-export protein SecB, found in Paramagnetospirillum magneticum (strain ATCC 700264 / AMB-1) (Magnetospirillum magneticum).